We begin with the raw amino-acid sequence, 307 residues long: Agmatinase (307 aa).

His128, Asp151, His153, Asp155, Asp232, and Asp234 together coordinate Mn(2+).

This sequence belongs to the arginase family. Agmatinase subfamily. The cofactor is Mn(2+).

It carries out the reaction agmatine + H2O = urea + putrescine. It functions in the pathway amine and polyamine biosynthesis; putrescine biosynthesis via agmatine pathway; putrescine from agmatine: step 1/1. In terms of biological role, catalyzes the formation of putrescine from agmatine. The protein is Agmatinase of Neisseria gonorrhoeae (strain ATCC 700825 / FA 1090).